The primary structure comprises 655 residues: Very long-chain specific acyl-CoA dehydrogenase, mitochondrial (655 aa).

A mitochondrion-targeting transit peptide spans 1-40 (MQAARMAASLGRQLLRLGGGSSRLTALLGQPRPGPARRPY). The disordered stretch occupies residues 23–42 (RLTALLGQPRPGPARRPYAG). Residues 41–482 (AGGAAQLALD…ALQGCMDKGK (442 aa)) form a catalytic region. K51 is modified (N6-acetyllysine). Residue K71 is modified to N6-acetyllysine; alternate. K71 carries the post-translational modification N6-succinyllysine; alternate. Position 195 is an N6-succinyllysine (K195). Residue 214-223 (FCLTEPSSGS) coordinates FAD. An S-nitrosocysteine modification is found at C237. K239 is subject to N6-acetyllysine; alternate. Position 239 is an N6-succinyllysine; alternate (K239). An FAD-binding site is contributed by 249-251 (WIS). N6-acetyllysine; alternate is present on residues K276 and K278. Residues K276 and K278 each carry the N6-succinyllysine; alternate modification. At K298 the chain carries N6-acetyllysine. Position 331 is an N6-acetyllysine; alternate (K331). Residue K331 is modified to N6-succinyllysine; alternate. N6-succinyllysine is present on K372. 461-463 (FEG) provides a ligand contact to substrate. Catalysis depends on E462, which acts as the Proton acceptor. FAD is bound at residue 464 to 466 (TND). At K482 the chain carries N6-acetyllysine; alternate. K482 bears the N6-succinyllysine; alternate mark. Residues 483–516 (ELSGLGSALKNPFGNAGLLLGEAGKQLRRRAGLG) form a membrane-anchoring region. Residues S517 and S522 each carry the phosphoserine modification. The residue at position 550 (K550) is an N6-acetyllysine. At K556 the chain carries N6-acetyllysine; alternate. K556 is modified (N6-succinyllysine; alternate). Residue Q562 participates in FAD binding. K639 is modified (N6-succinyllysine).

Belongs to the acyl-CoA dehydrogenase family. In terms of assembly, homodimer. Homodimerizes after import into the mitochondrion. The cofactor is FAD. Post-translationally, S-nitrosylation at Cys-237 in liver improves catalytic efficiency. In terms of tissue distribution, predominantly expressed in heart and skeletal muscle (at protein level). Also detected in kidney and liver (at protein level).

Its subcellular location is the mitochondrion inner membrane. The catalysed reaction is a very-long-chain 2,3-saturated fatty acyl-CoA + oxidized [electron-transfer flavoprotein] + H(+) = a very-long-chain (2E)-enoyl-CoA + reduced [electron-transfer flavoprotein]. It carries out the reaction decanoyl-CoA + oxidized [electron-transfer flavoprotein] + H(+) = (2E)-decenoyl-CoA + reduced [electron-transfer flavoprotein]. The enzyme catalyses dodecanoyl-CoA + oxidized [electron-transfer flavoprotein] + H(+) = (2E)-dodecenoyl-CoA + reduced [electron-transfer flavoprotein]. It catalyses the reaction tetradecanoyl-CoA + oxidized [electron-transfer flavoprotein] + H(+) = (2E)-tetradecenoyl-CoA + reduced [electron-transfer flavoprotein]. The catalysed reaction is oxidized [electron-transfer flavoprotein] + hexadecanoyl-CoA + H(+) = (2E)-hexadecenoyl-CoA + reduced [electron-transfer flavoprotein]. It carries out the reaction octadecanoyl-CoA + oxidized [electron-transfer flavoprotein] + H(+) = (2E)-octadecenoyl-CoA + reduced [electron-transfer flavoprotein]. The enzyme catalyses eicosanoyl-CoA + oxidized [electron-transfer flavoprotein] + H(+) = (2E)-eicosenoyl-CoA + reduced [electron-transfer flavoprotein]. It catalyses the reaction docosanoyl-CoA + oxidized [electron-transfer flavoprotein] + H(+) = (2E)-docosenoyl-CoA + reduced [electron-transfer flavoprotein]. The catalysed reaction is tetracosanoyl-CoA + oxidized [electron-transfer flavoprotein] + H(+) = (2E)-tetracosenoyl-CoA + reduced [electron-transfer flavoprotein]. It carries out the reaction (9Z)-hexadecenoyl-CoA + oxidized [electron-transfer flavoprotein] + H(+) = (2E,9Z)-hexadecadienoyl-CoA + reduced [electron-transfer flavoprotein]. The enzyme catalyses oxidized [electron-transfer flavoprotein] + (9Z)-octadecenoyl-CoA + H(+) = (2E,9Z)-octadecadienoyl-CoA + reduced [electron-transfer flavoprotein]. The protein operates within lipid metabolism; mitochondrial fatty acid beta-oxidation. Very long-chain specific acyl-CoA dehydrogenase is one of the acyl-CoA dehydrogenases that catalyze the first step of mitochondrial fatty acid beta-oxidation, an aerobic process breaking down fatty acids into acetyl-CoA and allowing the production of energy from fats. The first step of fatty acid beta-oxidation consists in the removal of one hydrogen from C-2 and C-3 of the straight-chain fatty acyl-CoA thioester, resulting in the formation of trans-2-enoyl-CoA. Among the different mitochondrial acyl-CoA dehydrogenases, very long-chain specific acyl-CoA dehydrogenase acts specifically on acyl-CoAs with saturated 12 to 24 carbons long primary chains. The polypeptide is Very long-chain specific acyl-CoA dehydrogenase, mitochondrial (Homo sapiens (Human)).